The following is a 403-amino-acid chain: G2/mitotic-specific cyclin-B3 (403 aa).

Disordered stretches follow at residues 1–86 (MPVA…APPA) and 102–122 (RKTP…PEEP). A compositionally biased stretch (polar residues) spans 7–25 (SKAQSSKQPRASKAPSVTE). The D-box motif lies at 51–59 (RSAFGDITN).

Belongs to the cyclin family. Cyclin AB subfamily. In terms of assembly, interacts with the CDK1 and CDK2 protein kinases. Post-translationally, ubiquitinated, leading to its degradation.

Its subcellular location is the nucleus. Cyclins are positive regulatory subunits of the cyclin-dependent kinases (CDKs), and thereby play an essential role in the control of the cell cycle, notably via their destruction during cell division. Could be involved at the G2/M (mitosis or meiosis) transition. G2/M cyclins accumulate steadily during G2 and are abruptly destroyed at mitosis. The protein is G2/mitotic-specific cyclin-B3 (CCNB3) of Gallus gallus (Chicken).